We begin with the raw amino-acid sequence, 306 residues long: Ribonuclease Z (306 aa).

Zn(2+)-binding residues include His63, His65, Asp67, His68, His141, Asp211, and His269. Residue Asp67 is the Proton acceptor of the active site.

The protein belongs to the RNase Z family. Homodimer. It depends on Zn(2+) as a cofactor.

It carries out the reaction Endonucleolytic cleavage of RNA, removing extra 3' nucleotides from tRNA precursor, generating 3' termini of tRNAs. A 3'-hydroxy group is left at the tRNA terminus and a 5'-phosphoryl group is left at the trailer molecule.. Its function is as follows. Zinc phosphodiesterase, which displays some tRNA 3'-processing endonuclease activity. Probably involved in tRNA maturation, by removing a 3'-trailer from precursor tRNA. This chain is Ribonuclease Z, found in Staphylococcus haemolyticus (strain JCSC1435).